A 246-amino-acid chain; its full sequence is Ly6/PLAUR domain-containing protein 4 (246 aa).

The N-terminal stretch at 1 to 26 (MGPQHLRLVQLFCLLGAISTLPRAGA) is a signal peptide. The N-linked (GlcNAc...) asparagine glycan is linked to N117. In terms of domain architecture, UPAR/Ly6 spans 142 to 223 (CPTCVGEHMK…LNILEKSQIV (82 aa)). A lipid anchor (GPI-anchor amidated alanine) is attached at A225. Residues 226-246 (ASSRQDPAWGVVLGLLFAFRD) constitute a propeptide, removed in mature form.

It is found in the cell membrane. This Homo sapiens (Human) protein is Ly6/PLAUR domain-containing protein 4 (LYPD4).